The following is a 246-amino-acid chain: Sulfate transporter CysZ (246 aa).

Helical transmembrane passes span 24 to 44 (LFVL…IGFA), 69 to 89 (IVWP…FTMV), 148 to 168 (LLVL…WILF), and 214 to 234 (LLIP…ATLF).

It belongs to the CysZ family.

The protein resides in the cell inner membrane. Its function is as follows. High affinity, high specificity proton-dependent sulfate transporter, which mediates sulfate uptake. Provides the sulfur source for the cysteine synthesis pathway. This Pseudomonas paraeruginosa (strain DSM 24068 / PA7) (Pseudomonas aeruginosa (strain PA7)) protein is Sulfate transporter CysZ.